Reading from the N-terminus, the 212-residue chain is Large ribosomal subunit protein uL3 (212 aa).

At Gln-153 the chain carries N5-methylglutamine.

It belongs to the universal ribosomal protein uL3 family. Part of the 50S ribosomal subunit. Forms a cluster with proteins L14 and L19. In terms of processing, methylated by PrmB.

Functionally, one of the primary rRNA binding proteins, it binds directly near the 3'-end of the 23S rRNA, where it nucleates assembly of the 50S subunit. In Colwellia psychrerythraea (strain 34H / ATCC BAA-681) (Vibrio psychroerythus), this protein is Large ribosomal subunit protein uL3.